Here is a 129-residue protein sequence, read N- to C-terminus: Calcitonin gene-related peptide 2 (129 aa).

The N-terminal stretch at 1-25 (MGFGKPSSFLAFSILVLCQAGSLQA) is a signal peptide. Residues 26–81 (QPLRSSLESLPDPAALSEKEGRLLLAALVKAYVQRKTNELEQEQEQEMEGSSLTAQ) constitute a propeptide that is removed on maturation. Cys85 and Cys90 are disulfide-bonded. Phe120 carries the phenylalanine amide modification. Positions 126-129 (DLQA) are excised as a propeptide.

This sequence belongs to the calcitonin family.

Its subcellular location is the secreted. In terms of biological role, CALCB/CGRP2 is a peptide hormone that induces vasodilation mediated by the CALCRL-RAMP1 receptor complex. Dilates a variety of vessels including the coronary, cerebral and systemic vasculature. Its abundance in the CNS also points toward a neurotransmitter or neuromodulator role. In Equus caballus (Horse), this protein is Calcitonin gene-related peptide 2 (CALCB).